The following is a 758-amino-acid chain: Inhibitor of nuclear factor kappa-B kinase subunit alpha (758 aa).

One can recognise a Protein kinase domain in the interval 15 to 301 (WVMKERLGTG…LNTDSKQPQC (287 aa)). ATP contacts are provided by residues 21–29 (LGTGGFGHV) and K44. D145 serves as the catalytic Proton acceptor. Residues 456–477 (LLRFNTNLTRYKNMMFSFSQQL) form a leucine-zipper region. The NEMO-binding stretch occupies residues 741 to 746 (QDWSWT).

It belongs to the protein kinase superfamily. Ser/Thr protein kinase family. I-kappa-B kinase subfamily. In terms of assembly, directly interacts with ikbkg/nemo.

Its subcellular location is the cytoplasm. The protein resides in the nucleus. It carries out the reaction L-seryl-[I-kappa-B protein] + ATP = O-phospho-L-seryl-[I-kappa-B protein] + ADP + H(+). With respect to regulation, activated when phosphorylated and inactivated when dephosphorylated. Phosphorylates inhibitors of NF-kappa-B thus leading to the dissociation of the inhibitor/NF-kappa-B complex and ultimately the degradation of the inhibitor. Phosphorylates 'Ser-10' of histone H3 at NF-kappa-B-regulated promoters during inflammatory responses triggered by cytokines. In Danio rerio (Zebrafish), this protein is Inhibitor of nuclear factor kappa-B kinase subunit alpha (chuk).